A 418-amino-acid chain; its full sequence is Actin-related protein 3B (418 aa).

It belongs to the actin family. ARP3 subfamily. Interacts with the Arp2/3 complex composed of ARP2, ARP3, ARPC1B, ARPC1B/p41-ARC, ARPC2/p34-ARC, ARPC3/p21-ARC, ARPC4/p20-ARC and ARPC5/p16-ARC.

It is found in the cytoplasm. Its subcellular location is the cytoskeleton. The protein localises to the cell projection. Its function is as follows. Plays a role in the organization of the actin cytoskeleton. May function as ATP-binding component of the Arp2/3 complex which is involved in regulation of actin polymerization and together with an activating nucleation-promoting factor (NPF) mediates the formation of branched actin networks. May decrease the metastatic potential of tumors. The polypeptide is Actin-related protein 3B (Actr3b) (Mus musculus (Mouse)).